Here is a 54-residue protein sequence, read N- to C-terminus: Large ribosomal subunit protein bL33B (54 aa).

The protein belongs to the bacterial ribosomal protein bL33 family.

The chain is Large ribosomal subunit protein bL33B from Mycolicibacterium smegmatis (strain ATCC 700084 / mc(2)155) (Mycobacterium smegmatis).